A 108-amino-acid chain; its full sequence is UPF0145 protein LJ_1287 (108 aa).

This sequence belongs to the UPF0145 family.

The sequence is that of UPF0145 protein LJ_1287 from Lactobacillus johnsonii (strain CNCM I-12250 / La1 / NCC 533).